The sequence spans 94 residues: Evasin P1104 (94 aa).

Positions 1 to 28 are cleaved as a signal peptide; sequence MASNLFTIFQLAGFVAIVFIVNLHSVSA. Intrachain disulfides connect Cys48–Cys66, Cys52–Cys68, and Cys62–Cys79. Asn51 is a glycosylation site (N-linked (GlcNAc...) asparagine).

It localises to the secreted. Salivary chemokine-binding protein which binds to host chemokines CXCL1, CXCL2, CXCL3, CXCL5, CXCL6, CXCL12 and CXCL13. This chain is Evasin P1104, found in Ixodes ricinus (Common tick).